The primary structure comprises 227 residues: Translation initiation factor 6 (227 aa).

It belongs to the eIF-6 family.

In terms of biological role, binds to the 50S ribosomal subunit and prevents its association with the 30S ribosomal subunit to form the 70S initiation complex. This chain is Translation initiation factor 6, found in Methanococcus maripaludis (strain C6 / ATCC BAA-1332).